A 311-amino-acid polypeptide reads, in one-letter code: D-allose-binding periplasmic protein (311 aa).

Residues 1-23 (MNKYLKYFSGTLVGLMLSTSAFA) form the signal peptide.

It belongs to the bacterial solute-binding protein 2 family.

The protein resides in the periplasm. Its function is as follows. Part of the binding-protein-dependent transport system AlsBAC for D-allose. The polypeptide is D-allose-binding periplasmic protein (alsB) (Escherichia coli (strain K12)).